The chain runs to 365 residues: Caffeic acid 3-O-methyltransferase 1 (365 aa).

130–136 (MNQDKVL) lines the substrate pocket. Positions 162–180 (AFEYHGTDPRFNKVFNKGM) are substrate binding. 5 residues coordinate S-adenosyl-L-methionine: G208, D231, D251, M252, and K265. The Proton acceptor role is filled by H269.

Belongs to the class I-like SAM-binding methyltransferase superfamily. Cation-independent O-methyltransferase family. COMT subfamily. In terms of assembly, homodimer.

The catalysed reaction is (E)-caffeate + S-adenosyl-L-methionine = (E)-ferulate + S-adenosyl-L-homocysteine + H(+). The protein operates within aromatic compound metabolism; phenylpropanoid biosynthesis. In terms of biological role, catalyzes the conversion of caffeic acid to ferulic acid and of 5-hydroxyferulic acid to sinapic acid. The resulting products may subsequently be converted to the corresponding alcohols that are incorporated into lignins. The chain is Caffeic acid 3-O-methyltransferase 1 (HOMT1) from Populus kitakamiensis (Aspen).